Reading from the N-terminus, the 1788-residue chain is Protein TIC 214 (1788 aa).

A run of 6 helical transmembrane segments spans residues 25–45, 70–90, 95–115, 132–152, 180–200, and 223–243; these read IINSVVVVGLYYGFFTTFSIG, IGFIAGQLMMFISIYYAPLHL, PHTITALVLPYLLFHFFWNNH, LNIQCIFLNSLIFQLFNHFIL, VGWLVGHIFFMKWVELVLFWI, and IFSILLFIVCIYYLGRMPSPL. 2 disordered regions span residues 248-297 and 1482-1526; these read LKKT…EEKE and DLEN…DFDR. Basic and acidic residues-rich tracts occupy residues 253-277 and 1513-1526; these read KREERGKNKEETDVEIEKISEEKGT and PLKKQTDGKEDFDR.

Belongs to the TIC214 family. As to quaternary structure, part of the Tic complex.

Its subcellular location is the plastid. It localises to the chloroplast inner membrane. Its function is as follows. Involved in protein precursor import into chloroplasts. May be part of an intermediate translocation complex acting as a protein-conducting channel at the inner envelope. This is Protein TIC 214 from Ranunculus macranthus (Large buttercup).